A 287-amino-acid chain; its full sequence is NADH-cytochrome b5 reductase 1 (287 aa).

The helical transmembrane segment at 5–25 threads the bilayer; sequence FEALVTALVLAVSFIFIYGKF. One can recognise an FAD-binding FR-type domain in the interval 41 to 145; the sequence is KDWQEFSLLT…RGPKGFYHYE (105 aa). Residues 125–142 and 151–183 contribute to the FAD site; these read AELAIGDRIKVRGPKGFY and EIGMIAGGTGISPMYQIIRAIFSNPRDKTRVCL.

This sequence belongs to the flavoprotein pyridine nucleotide cytochrome reductase family. As to quaternary structure, monomer. Component of the 2-(3-amino-3-carboxypropyl)histidine synthase complex composed of DPH1, DPH2, DPH3 and a NADH-dependent reductase, predominantly CBR1. Requires FAD as cofactor.

It localises to the mitochondrion outer membrane. The enzyme catalyses 2 Fe(III)-[cytochrome b5] + NADH = 2 Fe(II)-[cytochrome b5] + NAD(+) + H(+). The catalysed reaction is 2 Fe(3+)-[Dph3] + NADH = 2 Fe(2+)-[Dph3] + NAD(+) + H(+). The protein operates within protein modification; peptidyl-diphthamide biosynthesis. Its function is as follows. NADH-dependent reductase for DPH3 and cytochrome b5. Required for the first step of diphthamide biosynthesis, a post-translational modification of histidine which occurs in elongation factor 2. DPH1 and DPH2 transfer a 3-amino-3-carboxypropyl (ACP) group from S-adenosyl-L-methionine (SAM) to a histidine residue, the reaction is assisted by a reduction system comprising DPH3 and a NADH-dependent reductase, predominantly CBR1. By reducing DPH3, also involved in the formation of the tRNA wobble base modification mcm5s 2U (5-methoxycarbonylmethyl-2-thiouridine), mediated by the elongator complex. The cytochrome b5/NADH cytochrome b5 reductase electron transfer system supports the catalytic activity of several sterol biosynthetic enzymes. The sequence is that of NADH-cytochrome b5 reductase 1 (CBR1) from Eremothecium gossypii (strain ATCC 10895 / CBS 109.51 / FGSC 9923 / NRRL Y-1056) (Yeast).